Reading from the N-terminus, the 118-residue chain is uncharacterized protein (118 aa).

The chain crosses the membrane as a helical span at residues 21–38; sequence IVYFFFFFGLETFFSIIN.

Its subcellular location is the membrane. This is an uncharacterized protein from Dictyostelium discoideum (Social amoeba).